A 98-amino-acid chain; its full sequence is NADH-ubiquinone oxidoreductase chain 4L (98 aa).

The next 3 helical transmembrane spans lie at 1 to 21, 29 to 49, and 61 to 81; these read MSLIHINILMAFTMSLVGLLM, ALLCLEGMVLSLFILMTLTIL, and IILLVFAACEAAIGLALLVMV.

The protein belongs to the complex I subunit 4L family. As to quaternary structure, core subunit of respiratory chain NADH dehydrogenase (Complex I) which is composed of 45 different subunits.

Its subcellular location is the mitochondrion inner membrane. The enzyme catalyses a ubiquinone + NADH + 5 H(+)(in) = a ubiquinol + NAD(+) + 4 H(+)(out). Its function is as follows. Core subunit of the mitochondrial membrane respiratory chain NADH dehydrogenase (Complex I) which catalyzes electron transfer from NADH through the respiratory chain, using ubiquinone as an electron acceptor. Part of the enzyme membrane arm which is embedded in the lipid bilayer and involved in proton translocation. This chain is NADH-ubiquinone oxidoreductase chain 4L (MT-ND4L), found in Phocoena phocoena (Harbor porpoise).